Reading from the N-terminus, the 143-residue chain is Small ribosomal subunit protein uS12 (143 aa).

Positions M1 to D15 are enriched in basic residues. The disordered stretch occupies residues M1–Y27. The segment covering H16–Y27 has biased composition (basic and acidic residues).

It belongs to the universal ribosomal protein uS12 family. Component of the 40S small ribosomal subunit.

It is found in the cytoplasm. It localises to the cytosol. The protein localises to the rough endoplasmic reticulum. In Ictalurus punctatus (Channel catfish), this protein is Small ribosomal subunit protein uS12 (rps23).